We begin with the raw amino-acid sequence, 399 residues long: Argininosuccinate synthase (399 aa).

Residue 8–16 (AYSGGLDTS) coordinates ATP. Tyr-87 lines the L-citrulline pocket. Residue Gly-117 coordinates ATP. 3 residues coordinate L-aspartate: Thr-119, Asn-123, and Asp-124. L-citrulline is bound at residue Asn-123. L-citrulline contacts are provided by Arg-127, Ser-175, Glu-260, and Tyr-272.

Belongs to the argininosuccinate synthase family. Type 1 subfamily. As to quaternary structure, homotetramer.

Its subcellular location is the cytoplasm. It catalyses the reaction L-citrulline + L-aspartate + ATP = 2-(N(omega)-L-arginino)succinate + AMP + diphosphate + H(+). It functions in the pathway amino-acid biosynthesis; L-arginine biosynthesis; L-arginine from L-ornithine and carbamoyl phosphate: step 2/3. The sequence is that of Argininosuccinate synthase from Rhodococcus jostii (strain RHA1).